The sequence spans 461 residues: Kynureninase (461 aa).

Pyridoxal 5'-phosphate contacts are provided by residues Leu114, Thr115, 142 to 145 (FPSD), Asp228, His231, and Tyr253. Residue Lys254 is modified to N6-(pyridoxal phosphate)lysine. Pyridoxal 5'-phosphate is bound by residues Trp288 and Asn316.

This sequence belongs to the kynureninase family. Homodimer. The cofactor is pyridoxal 5'-phosphate.

The protein resides in the cytoplasm. The catalysed reaction is L-kynurenine + H2O = anthranilate + L-alanine + H(+). It carries out the reaction 3-hydroxy-L-kynurenine + H2O = 3-hydroxyanthranilate + L-alanine + H(+). Its pathway is amino-acid degradation; L-kynurenine degradation; L-alanine and anthranilate from L-kynurenine: step 1/1. It functions in the pathway cofactor biosynthesis; NAD(+) biosynthesis; quinolinate from L-kynurenine: step 2/3. Its function is as follows. Catalyzes the cleavage of L-kynurenine (L-Kyn) and L-3-hydroxykynurenine (L-3OHKyn) into anthranilic acid (AA) and 3-hydroxyanthranilic acid (3-OHAA), respectively. In Candida albicans (strain SC5314 / ATCC MYA-2876) (Yeast), this protein is Kynureninase.